The sequence spans 67 residues: Large ribosomal subunit protein bL35 (67 aa).

The protein belongs to the bacterial ribosomal protein bL35 family.

The polypeptide is Large ribosomal subunit protein bL35 (Bartonella tribocorum (strain CIP 105476 / IBS 506)).